The following is a 406-amino-acid chain: Leu/Ile/Val-binding protein homolog 5 (406 aa).

The N-terminal stretch at 1-29 (MIGTRLPAWTRVLACGVAGLSLMTISAKA) is a signal peptide.

Belongs to the leucine-binding protein family.

In terms of biological role, component of an amino-acid transport system. The chain is Leu/Ile/Val-binding protein homolog 5 from Brucella abortus (strain 2308).